The primary structure comprises 313 residues: MEPRNQTSASQFILLGLSEKPEQETLLFSLFFCMYLVMVVGNLLIILAISIDSHLHTPMYFFLANLSLVDFCLATNTIPKMLVSLQTGSKAISYPCCLIQMYFFHFFGIVDSVIIAMMAYDRFVAICHPLHYAKIMSLRLCRLLVGALWAFSCFISLTHILLMARLVFCGSHEVPHYFCDLTPILRLSCTDTSVNRIFILIVAGMVIATPFVCILASYARILVAIMKVPSAGGRKKAFSTCSSHLSVVALFYGTTIGVYLCPSSVLTTVKEKASAVMYTAVTPMLNPFIYSLRNRDLKGALRKLVNRKITSSS.

Over 1-25 (MEPRNQTSASQFILLGLSEKPEQET) the chain is Extracellular. Asparagine 5 carries N-linked (GlcNAc...) asparagine glycosylation. The chain crosses the membrane as a helical span at residues 26–49 (LLFSLFFCMYLVMVVGNLLIILAI). Residues 50 to 57 (SIDSHLHT) lie on the Cytoplasmic side of the membrane. A helical transmembrane segment spans residues 58-79 (PMYFFLANLSLVDFCLATNTIP). The Extracellular portion of the chain corresponds to 80-100 (KMLVSLQTGSKAISYPCCLIQ). An intrachain disulfide couples cysteine 97 to cysteine 189. The helical transmembrane segment at 101–120 (MYFFHFFGIVDSVIIAMMAY) threads the bilayer. The Cytoplasmic portion of the chain corresponds to 121–139 (DRFVAICHPLHYAKIMSLR). The chain crosses the membrane as a helical span at residues 140–158 (LCRLLVGALWAFSCFISLT). At 159 to 196 (HILLMARLVFCGSHEVPHYFCDLTPILRLSCTDTSVNR) the chain is on the extracellular side. The helical transmembrane segment at 197-219 (IFILIVAGMVIATPFVCILASYA) threads the bilayer. The Cytoplasmic segment spans residues 220-236 (RILVAIMKVPSAGGRKK). A helical transmembrane segment spans residues 237-259 (AFSTCSSHLSVVALFYGTTIGVY). The Extracellular segment spans residues 260–272 (LCPSSVLTTVKEK). Residues 273 to 292 (ASAVMYTAVTPMLNPFIYSL) form a helical membrane-spanning segment. Over 293-313 (RNRDLKGALRKLVNRKITSSS) the chain is Cytoplasmic.

The protein belongs to the G-protein coupled receptor 1 family.

The protein localises to the cell membrane. In terms of biological role, odorant receptor. In Homo sapiens (Human), this protein is Olfactory receptor 1M1.